A 90-amino-acid polypeptide reads, in one-letter code: Small ribosomal subunit protein bS20 (90 aa).

A disordered region spans residues 1–28 (MPNTSSASKRLRQNEKRRLLNRATRSNM).

This sequence belongs to the bacterial ribosomal protein bS20 family.

Functionally, binds directly to 16S ribosomal RNA. This Rhodopirellula baltica (strain DSM 10527 / NCIMB 13988 / SH1) protein is Small ribosomal subunit protein bS20.